The sequence spans 572 residues: Methionine--tRNA ligase (572 aa).

A 'HIGH' region motif is present at residues 11-21 (PYINGIKHLGN). Zn(2+)-binding residues include C143, C146, C156, and C159. The short motif at 346–350 (QFSTS) is the 'KMSKS' region element. T349 serves as a coordination point for ATP.

The protein belongs to the class-I aminoacyl-tRNA synthetase family. MetG type 1 subfamily. As to quaternary structure, monomer. Zn(2+) is required as a cofactor.

The protein localises to the cytoplasm. The catalysed reaction is tRNA(Met) + L-methionine + ATP = L-methionyl-tRNA(Met) + AMP + diphosphate. In terms of biological role, is required not only for elongation of protein synthesis but also for the initiation of all mRNA translation through initiator tRNA(fMet) aminoacylation. The chain is Methionine--tRNA ligase from Cereibacter sphaeroides (strain ATCC 17029 / ATH 2.4.9) (Rhodobacter sphaeroides).